Reading from the N-terminus, the 435-residue chain is Oocyte zinc finger protein XlCOF22 (435 aa).

Positions 71–92 are disordered; the sequence is NANTSAHFSRNRDSDKHERTHT. Over residues 80–91 the composition is skewed to basic and acidic residues; that stretch reads RNRDSDKHERTH. C2H2-type zinc fingers lie at residues 97–120, 126–148, 154–176, 182–204, 210–232, 238–260, 266–288, 294–316, 322–345, 351–373, 379–402, and 408–430; these read HSCS…RQSH, FSCS…QRTH, FCCF…RRTH, FSCL…QRTH, FSCF…QRTH, YSCS…RRTH, FSCS…RQTH, and VSCS…FKIH.

This sequence belongs to the krueppel C2H2-type zinc-finger protein family.

The protein localises to the nucleus. In terms of biological role, may be involved in transcriptional regulation. The protein is Oocyte zinc finger protein XlCOF22 of Xenopus laevis (African clawed frog).